Reading from the N-terminus, the 229-residue chain is Potassium/proton antiporter CemA (229 aa).

3 helical membrane passes run 7 to 27 (LTPF…SLSF), 106 to 126 (IVLH…YYFL), and 189 to 209 (IISG…KYWI).

Belongs to the CemA family.

Its subcellular location is the plastid. The protein localises to the chloroplast inner membrane. The enzyme catalyses K(+)(in) + H(+)(out) = K(+)(out) + H(+)(in). Functionally, contributes to K(+)/H(+) antiport activity by supporting proton efflux to control proton extrusion and homeostasis in chloroplasts in a light-dependent manner to modulate photosynthesis. Prevents excessive induction of non-photochemical quenching (NPQ) under continuous-light conditions. Indirectly promotes efficient inorganic carbon uptake into chloroplasts. In Calycanthus floridus var. glaucus (Eastern sweetshrub), this protein is Potassium/proton antiporter CemA.